The primary structure comprises 95 residues: Acylphosphatase (95 aa).

The Acylphosphatase-like domain occupies 7 to 95 (RLTAWVLGTV…PKGEVGFRTR (89 aa)). Active-site residues include R22 and N40.

Belongs to the acylphosphatase family.

The catalysed reaction is an acyl phosphate + H2O = a carboxylate + phosphate + H(+). The chain is Acylphosphatase (acyP) from Corynebacterium diphtheriae (strain ATCC 700971 / NCTC 13129 / Biotype gravis).